We begin with the raw amino-acid sequence, 207 residues long: Large ribosomal subunit protein bL25 (207 aa).

This sequence belongs to the bacterial ribosomal protein bL25 family. CTC subfamily. Part of the 50S ribosomal subunit; part of the 5S rRNA/L5/L18/L25 subcomplex. Contacts the 5S rRNA. Binds to the 5S rRNA independently of L5 and L18.

Its function is as follows. This is one of the proteins that binds to the 5S RNA in the ribosome where it forms part of the central protuberance. This Orientia tsutsugamushi (strain Ikeda) (Rickettsia tsutsugamushi) protein is Large ribosomal subunit protein bL25.